The following is a 284-amino-acid chain: Pantothenate synthetase (284 aa).

Residue 30-37 coordinates ATP; it reads MGNLHDGH. Residue H37 is the Proton donor of the active site. Q61 serves as a coordination point for (R)-pantoate. Q61 contacts beta-alanine. An ATP-binding site is contributed by 149 to 152; the sequence is GEKD. Q155 contributes to the (R)-pantoate binding site. ATP is bound by residues I178 and 186–189; that span reads LSSR.

This sequence belongs to the pantothenate synthetase family. Homodimer.

It localises to the cytoplasm. The catalysed reaction is (R)-pantoate + beta-alanine + ATP = (R)-pantothenate + AMP + diphosphate + H(+). Its pathway is cofactor biosynthesis; (R)-pantothenate biosynthesis; (R)-pantothenate from (R)-pantoate and beta-alanine: step 1/1. Catalyzes the condensation of pantoate with beta-alanine in an ATP-dependent reaction via a pantoyl-adenylate intermediate. The chain is Pantothenate synthetase from Salmonella choleraesuis (strain SC-B67).